The following is a 90-amino-acid chain: Cell division protein CrgA (90 aa).

The segment at 1-26 is disordered; that stretch reads MPKAKVTKNSIAPVSSNPSANRTPVK. Residues 7–26 show a composition bias toward polar residues; it reads TKNSIAPVSSNPSANRTPVK. 2 helical membrane-spanning segments follow: residues 38 to 58 and 69 to 89; these read VIMF…YLVG and AWNY…TMGW.

This sequence belongs to the CrgA family.

The protein resides in the cell membrane. Functionally, involved in cell division. This chain is Cell division protein CrgA, found in Corynebacterium efficiens (strain DSM 44549 / YS-314 / AJ 12310 / JCM 11189 / NBRC 100395).